A 330-amino-acid polypeptide reads, in one-letter code: Ig gamma-2A chain C region, A allele (330 aa).

Ig-like domains follow at residues 6–98 (PSVY…KKIE), 121–220 (PSVF…RTIS), and 229–325 (PQVY…KSFS). Cystine bridges form between Cys27/Cys82, Cys144/Cys204, and Cys250/Cys308. Residue Asn180 is glycosylated (N-linked (GlcNAc...) asparagine).

This is Ig gamma-2A chain C region, A allele (Ighg) from Mus musculus (Mouse).